The following is a 56-amino-acid chain: Large ribosomal subunit protein bL33 (56 aa).

The segment covering 1-12 (MASKGGRDKIKL) has biased composition (basic and acidic residues). The segment at 1 to 30 (MASKGGRDKIKLESTAGTGHFYTTTKNKRT) is disordered. Residues 15 to 25 (TAGTGHFYTTT) show a composition bias toward polar residues.

The protein belongs to the bacterial ribosomal protein bL33 family.

The protein is Large ribosomal subunit protein bL33 of Ralstonia nicotianae (strain ATCC BAA-1114 / GMI1000) (Ralstonia solanacearum).